The chain runs to 278 residues: Protein D7 (278 aa).

2 consecutive CHHC U11-48K-type zinc fingers follow at residues 6–33 and 40–67; these read LMQC…RENN and LATC…EYRV. Positions 9, 15, 25, 29, 43, 49, 59, and 63 each coordinate Zn(2+). Over residues 149–164 the composition is skewed to polar residues; it reads QVKQNQPEPEPFTSSE. 2 disordered regions span residues 149-230 and 249-278; these read QVKQ…PKAN and PGGS…WVRK. Basic and acidic residues predominate over residues 165–175; the sequence is RNYDPRSKEPP. Polar residues predominate over residues 188 to 200; it reads ATTNTNPWCRQTG. A compositionally biased stretch (basic and acidic residues) spans 214–225; sequence SSDEGPRNKEFP.

Belongs to the UPF0224 (FAM112) family.

It localises to the cytoplasm. Involved in oocyte maturation. It is possible that D7 is required at a certain point in the maturation process and that maturation cannot proceed beyond this point unless a threshold amount of D7 protein is provided. In Xenopus laevis (African clawed frog), this protein is Protein D7 (d7).